Consider the following 269-residue polypeptide: GTP cyclohydrolase FolE2 2 (269 aa).

The protein belongs to the GTP cyclohydrolase IV family.

It catalyses the reaction GTP + H2O = 7,8-dihydroneopterin 3'-triphosphate + formate + H(+). The protein operates within cofactor biosynthesis; 7,8-dihydroneopterin triphosphate biosynthesis; 7,8-dihydroneopterin triphosphate from GTP: step 1/1. In terms of biological role, converts GTP to 7,8-dihydroneopterin triphosphate. In Burkholderia lata (strain ATCC 17760 / DSM 23089 / LMG 22485 / NCIMB 9086 / R18194 / 383), this protein is GTP cyclohydrolase FolE2 2.